The primary structure comprises 62 residues: Large ribosomal subunit protein bL28 (62 aa).

This sequence belongs to the bacterial ribosomal protein bL28 family.

This Wolinella succinogenes (strain ATCC 29543 / DSM 1740 / CCUG 13145 / JCM 31913 / LMG 7466 / NCTC 11488 / FDC 602W) (Vibrio succinogenes) protein is Large ribosomal subunit protein bL28.